The sequence spans 138 residues: MGRILAIDYGRKRTGLAVTDPLKIIPGGLTTVPTHTLLDFLRDYVSREPVERFVLGLPRRMNYEESESMTYIRPFAVKLAQAFPSIPITYVDERFTSRMAQRTILEAGIGKMKRRDKALVDEVSAVIILQSYLDNPDR.

This sequence belongs to the YqgF nuclease family.

It is found in the cytoplasm. Could be a nuclease involved in processing of the 5'-end of pre-16S rRNA. The chain is Putative pre-16S rRNA nuclease from Porphyromonas gingivalis (strain ATCC BAA-308 / W83).